The chain runs to 300 residues: 17-beta-hydroxysteroid dehydrogenase 13 (300 aa).

Positions 1 to 19 (MNIILEILLLLITIIYSYL) are cleaved as a signal peptide. S33 is subject to Phosphoserine. 40-67 (LITGAGHGIGRQTTYEFAKRQSILVLWD) lines the NAD(+) pocket. S172 contacts substrate. Y185 serves as the catalytic Proton acceptor. Residue K189 participates in NAD(+) binding.

Belongs to the short-chain dehydrogenases/reductases (SDR) family. In terms of tissue distribution, highly expressed in the liver. Also detected in ovary, bone marrow, kidney, brain, lung, skeletal muscle, bladder and testis.

The protein resides in the lipid droplet. It localises to the endoplasmic reticulum. It is found in the cytoplasm. It carries out the reaction 17beta-estradiol + NAD(+) = estrone + NADH + H(+). The enzyme catalyses all-trans-retinol + NAD(+) = all-trans-retinal + NADH + H(+). It catalyses the reaction all-trans-retinal + NAD(+) + H2O = all-trans-retinoate + NADH + 2 H(+). Plays a pivotal role in hepatic lipid metabolism. In vitro, it catalyzes the oxidation of a variety of lipid substrates, including 17beta-estradiol, retinol, retinal, and leukotriene B4. Its function is as follows. Has retinol/retinal dehydrogenase activity in vitro. Functionally, does not have retinol/retinal dehydrogenase activity in vitro. This Homo sapiens (Human) protein is 17-beta-hydroxysteroid dehydrogenase 13.